The chain runs to 877 residues: Putative ankyrin repeat protein R748 (877 aa).

ANK repeat units follow at residues 44 to 74 (IRHICLTGSYNNNQMSIMKILMNKFPKTINV), 79 to 109 (QNNTYLHQSIFNRHKIFVDFFMNELNDNINY), 115 to 145 (IGISHLHALVNYGYIDHIETAIIKDPGAIQQ), 202 to 231 (MGYRAIECAVRYCSTDVIDELISLGFSINE), 243 to 272 (NNNDLIGFATQIDRLDMVKHLINIGAPIHM), and 282 to 311 (LVPTCLVVAIKFKRDQCIHYLLNLPESIQA). The disordered stretch occupies residues 525-579 (DSDEDPVCDSNESDNSNDINNHVKSDNKLNSSNDYYDEDDSEDNYNNQSDDEPLV). Low complexity predominate over residues 533–544 (DSNESDNSNDIN).

This Acanthamoeba polyphaga mimivirus (APMV) protein is Putative ankyrin repeat protein R748.